The primary structure comprises 253 residues: Probable transcriptional regulatory protein Tery_2125 (253 aa).

It belongs to the TACO1 family.

It localises to the cytoplasm. The polypeptide is Probable transcriptional regulatory protein Tery_2125 (Trichodesmium erythraeum (strain IMS101)).